Reading from the N-terminus, the 204-residue chain is Outer-membrane lipoprotein carrier protein (204 aa).

The N-terminal stretch at 1–21 (MKKYLNLTALLLVGISNVTWA) is a signal peptide.

It belongs to the LolA family. Monomer.

The protein resides in the periplasm. Its function is as follows. Participates in the translocation of lipoproteins from the inner membrane to the outer membrane. Only forms a complex with a lipoprotein if the residue after the N-terminal Cys is not an aspartate (The Asp acts as a targeting signal to indicate that the lipoprotein should stay in the inner membrane). This chain is Outer-membrane lipoprotein carrier protein, found in Histophilus somni (strain 129Pt) (Haemophilus somnus).